The primary structure comprises 109 residues: Class I hydrophobin G (109 aa).

An N-terminal signal peptide occupies residues 1–19 (MRLSILSVFSLVGAGMVSA). 4 cysteine pairs are disulfide-bonded: cysteine 36–cysteine 90, cysteine 42–cysteine 84, cysteine 43–cysteine 76, and cysteine 91–cysteine 105.

It belongs to the fungal hydrophobin family.

The protein resides in the secreted. Its subcellular location is the cell wall. Functionally, aerial growth, conidiation, and dispersal of filamentous fungi in the environment rely upon a capability of their secreting small amphipathic proteins called hydrophobins (HPBs) with low sequence identity. Class I can self-assemble into an outermost layer of rodlet bundles on aerial cell surfaces, conferring cellular hydrophobicity that supports fungal growth, development and dispersal; whereas Class II form highly ordered films at water-air interfaces through intermolecular interactions but contribute nothing to the rodlet structure. In P.expansum, hydrophobins contribute to germination, tolerance to cold stress and mycotoxins patulin and citrinin production. In Penicillium expansum (Blue mold rot fungus), this protein is Class I hydrophobin G.